The primary structure comprises 382 residues: 2-epi-valiolone synthase (382 aa).

NAD(+)-binding positions include 92 to 95 (EKSK), 124 to 128 (GVVVD), 148 to 149 (TT), Lys-161, Lys-170, and 188 to 191 (HLRT). 3 residues coordinate Zn(2+): Glu-203, His-266, and His-283.

Belongs to the sugar phosphate cyclases superfamily. EVS family. Requires NAD(+) as cofactor. Co(2+) serves as cofactor. Zn(2+) is required as a cofactor.

It carries out the reaction D-sedoheptulose 7-phosphate = 2-epi-valiolone + phosphate. In terms of biological role, catalyzes the conversion of sedoheptulose 7-phosphate to 2-epi-valiolone, which may serve as an alternative precursor for aminocyclitol biosynthesis. This chain is 2-epi-valiolone synthase, found in Actinosynnema mirum (strain ATCC 29888 / DSM 43827 / JCM 3225 / NBRC 14064 / NCIMB 13271 / NRRL B-12336 / IMRU 3971 / 101).